The sequence spans 345 residues: Short-wave-sensitive opsin 1 (345 aa).

Topologically, residues 1-30 (MSEEEFYLFKNISSVGPWDGPQYHIAPVWA) are extracellular. N-linked (GlcNAc...) asparagine glycosylation is present at Asn11. A helical membrane pass occupies residues 31–55 (FYLQAAFMGTVFLIGFPLNAMVLVA). Residues 56-67 (TLRYKKLRQPLN) are Cytoplasmic-facing. Residues 68–93 (YILVNVSFGGFLLCIFSVFPVFVASC) traverse the membrane as a helical segment. Residues 94-107 (NGYFVFGRHVCALE) are Extracellular-facing. A disulfide bond links Cys104 and Cys181. Residues 108 to 127 (GFLGTVAGLVTGWSLAFLAF) form a helical membrane-spanning segment. Residues 128 to 146 (ERYIVICKPFGNFRFSSKH) are Cytoplasmic-facing. Residues 147-170 (ALTVVLATWTIGIGVSIPPFFGWS) form a helical membrane-spanning segment. Residues 171–196 (RFIPEGLQCSCGPDWYTVGTKYRSES) lie on the Extracellular side of the membrane. Residues 197–224 (YTWFLFIFCFIVPLSLICFSYTQLLRAL) form a helical membrane-spanning segment. At 225–246 (KAVAAQQQESATTQKAEREVSR) the chain is on the cytoplasmic side. The chain crosses the membrane as a helical span at residues 247 to 270 (MVVVMVGSFCVCYVPYAAFAMYMV). The Extracellular segment spans residues 271–278 (NNRNHGLD). Residues 279–303 (LRLVTIPSFFSKSACIYNPIIYCFM) traverse the membrane as a helical segment. Lys290 carries the post-translational modification N6-(retinylidene)lysine. The Cytoplasmic portion of the chain corresponds to 304–345 (NKQFQACIMKMVCGKAMTDESDTCSSQKTEVSTVSSTQVGPN).

It belongs to the G-protein coupled receptor 1 family. Opsin subfamily. Phosphorylated on some or all of the serine and threonine residues present in the C-terminal region. As to expression, the three color pigments are found in the cone photoreceptor cells. Expressed throughout the epidermis and dermis, primarily in the stratum granulosum in the facial and abdominal skin (at protein level). Expressed in dermal fibroblasts (at protein level). Expressed in melanocytes (at protein level).

The protein resides in the cell membrane. It localises to the photoreceptor inner segment. It is found in the cell projection. The protein localises to the cilium. Its subcellular location is the photoreceptor outer segment. The protein resides in the cytoplasm. It localises to the perinuclear region. Visual pigments are the light-absorbing molecules that mediate vision. They consist of an apoprotein, opsin, covalently linked to cis-retinal. Required for the maintenance of cone outer segment organization in the ventral retina, but not essential for the maintenance of functioning cone photoreceptors. Involved in ensuring correct abundance and localization of retinal membrane proteins. May increase spectral sensitivity in dim light. The chain is Short-wave-sensitive opsin 1 (OPN1SW) from Homo sapiens (Human).